A 428-amino-acid polypeptide reads, in one-letter code: MTGKSVRDVERYQAVLGSLLSEEENKYCADCQAKGPRWASWNIGVFICIRCAGIHRNLGVHISRVKSVNLDQWTQEQIQCMQEMGNGKANRLYEAFLPENFRRPQTDQAVEGFIRDKYEKKKYMDRSIDINTFRKEKDDKWKKSNEPVSERKLEPIVFEKVKMPQKKEETQQSRKSSPKSTEPVIDLLGLDAPVPSTLTNGRPCSLEKDLDLFASVGLNSDSRKVSGSMPTSGSAGSVPENLNLFPEPGGKGEEAGKKQLSKDSILSLYGSQTPQLPAQGAMFMAPAQMAYPAAAYTSFPGVPPSSSMMGGMMAPSVGVMAQHGAAGMVTPMAIPAGYVGNVQAAVIGVPNGMMAAQQAGYVAGMAAVPQPVYGVQPAQQLQWNITQMTQQMAGMNFYGANGVMGYGQSMGGGGAQGSNQSLSTQLWK.

One can recognise an Arf-GAP domain in the interval 13 to 139 (QAVLGSLLSE…INTFRKEKDD (127 aa)). A C4-type zinc finger spans residues 28–51 (CADCQAKGPRWASWNIGVFICIRC). Positions 161 to 172 (VKMPQKKEETQQ) are enriched in basic and acidic residues. 2 disordered regions span residues 161–182 (VKMPQKKEETQQSRKSSPKSTE) and 222–258 (SRKVSGSMPTSGSAGSVPENLNLFPEPGGKGEEAGKK).

May interact with clathrin heavy chains.

Functionally, GTPase activating protein. May play a role in clathrin-dependent retrograde transport from early endosomes to the trans-Golgi network. The chain is Stromal membrane-associated protein 2 (SMAP2) from Gallus gallus (Chicken).